A 134-amino-acid polypeptide reads, in one-letter code: Large ribosomal subunit protein uL16c (134 aa).

Belongs to the universal ribosomal protein uL16 family. Part of the 50S ribosomal subunit.

It localises to the plastid. It is found in the chloroplast. The protein is Large ribosomal subunit protein uL16c of Oltmannsiellopsis viridis (Marine flagellate).